Consider the following 172-residue polypeptide: Cold-inducible RNA-binding protein (172 aa).

The 79-residue stretch at 6-84 (GKLFVGGLSF…RQIRVDQAGK (79 aa)) folds into the RRM domain. The segment at 70–172 (KSVDGRQIRV…SYDSYATHNE (103 aa)) is disordered. 2 stretches are compositionally biased toward gly residues: residues 93 to 105 (YRGG…GFFR) and 114 to 137 (FSRG…GYGG). 6 positions are modified to phosphoserine: Ser130, Ser138, Ser146, Ser156, Ser159, and Ser163. Positions 138-172 (SRDYYASRSQGGSYGYRSSGGSYRDSYDSYATHNE) are enriched in low complexity.

As to quaternary structure, interacts with EIF4G1. Associates with ribosomes. Methylated on arginine residues. Methylation of the RGG motifs is a prerequisite for recruitment into SGs. In terms of processing, phosphorylated by CK2, GSK3A and GSK3B. Phosphorylation by GSK3B increases RNA-binding activity to the TXN 3'-UTR transcript upon exposure to UV radiation. Ubiquitous.

It localises to the nucleus. Its subcellular location is the nucleoplasm. It is found in the cytoplasm. Cold-inducible mRNA binding protein that plays a protective role in the genotoxic stress response by stabilizing transcripts of genes involved in cell survival. Promotes assembly of stress granules (SGs), when overexpressed. Seems to play an essential role in cold-induced suppression of cell proliferation. Acts as a translational repressor. Acts as a translational activator. Binds specifically to the 3'-untranslated regions (3'-UTRs) of stress-responsive transcripts RPA2 and TXN. This is Cold-inducible RNA-binding protein (Cirbp) from Mus musculus (Mouse).